Consider the following 206-residue polypeptide: ATP-dependent Clp protease proteolytic subunit 2 (206 aa).

The Nucleophile role is filled by Ser-100. The active site involves His-125.

The protein belongs to the peptidase S14 family. In terms of assembly, fourteen ClpP subunits assemble into 2 heptameric rings which stack back to back to give a disk-like structure with a central cavity, resembling the structure of eukaryotic proteasomes.

Its subcellular location is the cytoplasm. It catalyses the reaction Hydrolysis of proteins to small peptides in the presence of ATP and magnesium. alpha-casein is the usual test substrate. In the absence of ATP, only oligopeptides shorter than five residues are hydrolyzed (such as succinyl-Leu-Tyr-|-NHMec, and Leu-Tyr-Leu-|-Tyr-Trp, in which cleavage of the -Tyr-|-Leu- and -Tyr-|-Trp bonds also occurs).. Cleaves peptides in various proteins in a process that requires ATP hydrolysis. Has a chymotrypsin-like activity. Plays a major role in the degradation of misfolded proteins. The sequence is that of ATP-dependent Clp protease proteolytic subunit 2 from Myxococcus xanthus.